Here is a 333-residue protein sequence, read N- to C-terminus: Anthranilate phosphoribosyltransferase (333 aa).

5-phospho-alpha-D-ribose 1-diphosphate contacts are provided by residues Gly80, 83–84, Thr88, 90–93, 108–116, and Ser120; these read GD, NLST, and KHGNRSASG. Gly80 contributes to the anthranilate binding site. A Mg(2+)-binding site is contributed by Ser92. Asn111 contributes to the anthranilate binding site. Arg166 is a binding site for anthranilate. The Mg(2+) site is built by Asp224 and Glu225.

Belongs to the anthranilate phosphoribosyltransferase family. As to quaternary structure, homodimer. It depends on Mg(2+) as a cofactor.

The catalysed reaction is N-(5-phospho-beta-D-ribosyl)anthranilate + diphosphate = 5-phospho-alpha-D-ribose 1-diphosphate + anthranilate. It participates in amino-acid biosynthesis; L-tryptophan biosynthesis; L-tryptophan from chorismate: step 2/5. Its function is as follows. Catalyzes the transfer of the phosphoribosyl group of 5-phosphorylribose-1-pyrophosphate (PRPP) to anthranilate to yield N-(5'-phosphoribosyl)-anthranilate (PRA). The chain is Anthranilate phosphoribosyltransferase from Pyrobaculum arsenaticum (strain DSM 13514 / JCM 11321 / PZ6).